Consider the following 292-residue polypeptide: 4-hydroxy-tetrahydrodipicolinate synthase (292 aa).

T48 is a binding site for pyruvate. Y136 functions as the Proton donor/acceptor in the catalytic mechanism. K164 functions as the Schiff-base intermediate with substrate in the catalytic mechanism. Residue I204 coordinates pyruvate.

It belongs to the DapA family. As to quaternary structure, homotetramer; dimer of dimers.

It is found in the cytoplasm. The enzyme catalyses L-aspartate 4-semialdehyde + pyruvate = (2S,4S)-4-hydroxy-2,3,4,5-tetrahydrodipicolinate + H2O + H(+). It functions in the pathway amino-acid biosynthesis; L-lysine biosynthesis via DAP pathway; (S)-tetrahydrodipicolinate from L-aspartate: step 3/4. Functionally, catalyzes the condensation of (S)-aspartate-beta-semialdehyde [(S)-ASA] and pyruvate to 4-hydroxy-tetrahydrodipicolinate (HTPA). The sequence is that of 4-hydroxy-tetrahydrodipicolinate synthase from Acetivibrio thermocellus (strain ATCC 27405 / DSM 1237 / JCM 9322 / NBRC 103400 / NCIMB 10682 / NRRL B-4536 / VPI 7372) (Clostridium thermocellum).